A 68-amino-acid chain; its full sequence is Protein SlyX homolog (68 aa).

This sequence belongs to the SlyX family.

In Pseudomonas syringae pv. syringae (strain B728a), this protein is Protein SlyX homolog.